A 146-amino-acid polypeptide reads, in one-letter code: Ecotin-like protein 1 (146 aa).

Belongs to the protease inhibitor I11 (ecotin) family.

This chain is Ecotin-like protein 1 (ISP1), found in Leishmania major.